Reading from the N-terminus, the 392-residue chain is Speckle-type POZ protein-like A (392 aa).

The MATH domain occupies 31-161; it reads KFSYMWTINN…DDKLTLFCEV (131 aa). The 68-residue stretch at 200-267 folds into the BTB domain; it reads TDCSLYVGGQ…IYTGKAPNLE (68 aa).

It belongs to the Tdpoz family. As to quaternary structure, homodimer. Heterodimer with SPOP. Component of cullin-RING-based BCR (BTB-CUL3-RBX1) E3 ubiquitin-protein ligase complexes containing homodimeric SPOPL or the heterodimer formed by SPOP and SPOPL.

It is found in the nucleus. It functions in the pathway protein modification; protein ubiquitination. In terms of biological role, component of a cullin-RING-based BCR (BTB-CUL3-RBX1) E3 ubiquitin-protein ligase complex that mediates the ubiquitination and subsequent proteasomal degradation of target proteins, but with relatively low efficiency. The sequence is that of Speckle-type POZ protein-like A (spopla) from Danio rerio (Zebrafish).